Reading from the N-terminus, the 275-residue chain is Phosphonoacetaldehyde hydrolase (275 aa).

The active-site Nucleophile is Asp15. Residues Asp15 and Ala17 each coordinate Mg(2+). The Schiff-base intermediate with substrate role is filled by Lys56. Asp189 lines the Mg(2+) pocket.

It belongs to the HAD-like hydrolase superfamily. PhnX family. As to quaternary structure, homodimer. Mg(2+) serves as cofactor.

The catalysed reaction is phosphonoacetaldehyde + H2O = acetaldehyde + phosphate + H(+). Involved in phosphonate degradation. The chain is Phosphonoacetaldehyde hydrolase from Pseudomonas putida (strain ATCC 700007 / DSM 6899 / JCM 31910 / BCRC 17059 / LMG 24140 / F1).